Here is a 287-residue protein sequence, read N- to C-terminus: Hydroxysteroid 11-beta-dehydrogenase 1-like protein (287 aa).

Positions 1 to 15 (MKVLLLTGLGALFFA) are cleaved as a signal peptide. Residues 36 to 62 (GVSAGIGEELAYHYARLGSHLVLTAHT), 87 to 88 (DM), and 114 to 116 (NHL) each bind NADP(+). S165 lines the substrate pocket. Catalysis depends on Y178, which acts as the Proton acceptor. NADP(+) contacts are provided by residues 178 to 182 (YSAAK) and 211 to 217 (GLRDRAS). N280 is a glycosylation site (N-linked (GlcNAc...) asparagine).

The protein belongs to the short-chain dehydrogenases/reductases (SDR) family.

The protein localises to the secreted. It catalyses the reaction cortisone + NADPH + H(+) = cortisol + NADP(+). Functionally, unidirectional NADP(+)-dependent cortisol dehydrogenase (in vitro). The sequence is that of Hydroxysteroid 11-beta-dehydrogenase 1-like protein (HSD11B1L) from Bos taurus (Bovine).